Reading from the N-terminus, the 455-residue chain is Bifunctional protein GlmU (455 aa).

A pyrophosphorylase region spans residues M1–R229. UDP-N-acetyl-alpha-D-glucosamine is bound by residues L8 to G11, K22, Q73, and G78 to T79. D103 contributes to the Mg(2+) binding site. Residues G140, E155, N170, and N227 each contribute to the UDP-N-acetyl-alpha-D-glucosamine site. N227 serves as a coordination point for Mg(2+). A linker region spans residues L230–N250. The segment at G251–K455 is N-acetyltransferase. R332 and K350 together coordinate UDP-N-acetyl-alpha-D-glucosamine. H362 (proton acceptor) is an active-site residue. Residues Y365 and N376 each coordinate UDP-N-acetyl-alpha-D-glucosamine. Acetyl-CoA-binding positions include N385–Y386, A422, and R439.

The protein in the N-terminal section; belongs to the N-acetylglucosamine-1-phosphate uridyltransferase family. This sequence in the C-terminal section; belongs to the transferase hexapeptide repeat family. Homotrimer. Mg(2+) serves as cofactor.

It is found in the cytoplasm. It catalyses the reaction alpha-D-glucosamine 1-phosphate + acetyl-CoA = N-acetyl-alpha-D-glucosamine 1-phosphate + CoA + H(+). The enzyme catalyses N-acetyl-alpha-D-glucosamine 1-phosphate + UTP + H(+) = UDP-N-acetyl-alpha-D-glucosamine + diphosphate. It functions in the pathway nucleotide-sugar biosynthesis; UDP-N-acetyl-alpha-D-glucosamine biosynthesis; N-acetyl-alpha-D-glucosamine 1-phosphate from alpha-D-glucosamine 6-phosphate (route II): step 2/2. The protein operates within nucleotide-sugar biosynthesis; UDP-N-acetyl-alpha-D-glucosamine biosynthesis; UDP-N-acetyl-alpha-D-glucosamine from N-acetyl-alpha-D-glucosamine 1-phosphate: step 1/1. It participates in bacterial outer membrane biogenesis; LPS lipid A biosynthesis. Catalyzes the last two sequential reactions in the de novo biosynthetic pathway for UDP-N-acetylglucosamine (UDP-GlcNAc). The C-terminal domain catalyzes the transfer of acetyl group from acetyl coenzyme A to glucosamine-1-phosphate (GlcN-1-P) to produce N-acetylglucosamine-1-phosphate (GlcNAc-1-P), which is converted into UDP-GlcNAc by the transfer of uridine 5-monophosphate (from uridine 5-triphosphate), a reaction catalyzed by the N-terminal domain. The sequence is that of Bifunctional protein GlmU from Clostridium tetani (strain Massachusetts / E88).